A 181-amino-acid polypeptide reads, in one-letter code: uncharacterized protein (181 aa).

The protein belongs to the methyltransferase superfamily.

This is an uncharacterized protein from Bacillus subtilis (strain 168).